The sequence spans 214 residues: Cytolysin tenebrosin-B (214 aa).

Positions 1-19 (MNRLIIVFIVVTMICAATA) are cleaved as a signal peptide. Residues 20–35 (LSTKRRINKEEKDEKR) constitute a propeptide that is removed on maturation. Residues 38–47 (AVAGAVIEGA) form a plays an important role in the hemolytic activity region. The segment at 46-65 (GATLTFNVLQTVLKALGDIS) is N-terminal region. Positions 89, 122, 140, 142, 168, 172, and 173 each coordinate phosphocholine. The interval 140–155 (SIPFDYNLYSNWWNVK) is trp-rich region, which is important for the binding to lipid membrane. Positions 179–181 (RGD) match the Cell attachment site, crucial for protein stability motif.

The protein belongs to the actinoporin family. Sea anemone subfamily. In terms of assembly, octamer or nonamer in membranes. Monomer in the soluble state.

It is found in the secreted. The protein localises to the nematocyst. Its subcellular location is the target cell membrane. Its function is as follows. Pore-forming protein that forms cations-selective hydrophilic pores of around 1 nm and causes cardiac stimulation and cytolysis. Pore formation is a multi-step process that involves specific recognition of membrane sphingomyelin (but neither cholesterol nor phosphatidylcholine) using aromatic rich region and adjacent phosphocholine (POC) binding site, firm binding to the membrane (mainly driven by hydrophobic interactions) accompanied by the transfer of the N-terminal region to the lipid-water interface and finally pore formation after oligomerization of monomers. The chain is Cytolysin tenebrosin-B from Actinia tenebrosa (Australian red waratah sea anemone).